The following is a 341-amino-acid chain: Phosphoribosylformylglycinamidine cyclo-ligase (341 aa).

This sequence belongs to the AIR synthase family.

It localises to the cytoplasm. The enzyme catalyses 2-formamido-N(1)-(5-O-phospho-beta-D-ribosyl)acetamidine + ATP = 5-amino-1-(5-phospho-beta-D-ribosyl)imidazole + ADP + phosphate + H(+). It functions in the pathway purine metabolism; IMP biosynthesis via de novo pathway; 5-amino-1-(5-phospho-D-ribosyl)imidazole from N(2)-formyl-N(1)-(5-phospho-D-ribosyl)glycinamide: step 2/2. This chain is Phosphoribosylformylglycinamidine cyclo-ligase, found in Caldicellulosiruptor saccharolyticus (strain ATCC 43494 / DSM 8903 / Tp8T 6331).